Reading from the N-terminus, the 406-residue chain is Testis-specific Y-encoded-like protein 5 (406 aa).

Residues 1-25 are compositionally biased toward basic residues; it reads MSGRSRGRKSSRAKGRGKGRARARV. Disordered stretches follow at residues 1–67, 132–164, and 382–406; these read MSGR…PAEL, IGNRRVPGRKAPDTRSATGRGPQATVSGKPKMA, and RGEKGKEERPGPAKLSPAPAVRQPN. The segment covering 27–38 has biased composition (basic and acidic residues); that stretch reads AAAEDAWHDEKP. Positions 49 to 62 are enriched in low complexity; the sequence is AAAQVQAGAAQGGA. Basic and acidic residues predominate over residues 382–392; that stretch reads RGEKGKEERPG.

This sequence belongs to the nucleosome assembly protein (NAP) family. In terms of assembly, interacts with USP7.

In terms of biological role, involved in modulation of cell growth and cellular response to gamma radiation probably via regulation of the Akt signaling pathway. Involved in regulation of p53/TP53. Suppresses p53/TP53 protein levels and promotes its ubiquitination; the function is dependent on USP7 and independent on MDM2. Proposed to displace p53/TP53 from interaction with USP7. In Mus musculus (Mouse), this protein is Testis-specific Y-encoded-like protein 5 (Tspyl5).